The following is a 316-amino-acid chain: tRNA dimethylallyltransferase (316 aa).

17–24 (GPTASGKT) contacts ATP. Residue 19 to 24 (TASGKT) participates in substrate binding. 4 interaction with substrate tRNA regions span residues 42–45 (DSVL), 166–170 (QRLSR), 247–252 (RCVGYR), and 280–287 (KRQITWLR).

This sequence belongs to the IPP transferase family. As to quaternary structure, monomer. Requires Mg(2+) as cofactor.

It carries out the reaction adenosine(37) in tRNA + dimethylallyl diphosphate = N(6)-dimethylallyladenosine(37) in tRNA + diphosphate. Functionally, catalyzes the transfer of a dimethylallyl group onto the adenine at position 37 in tRNAs that read codons beginning with uridine, leading to the formation of N6-(dimethylallyl)adenosine (i(6)A). The protein is tRNA dimethylallyltransferase of Shigella flexneri.